Reading from the N-terminus, the 389-residue chain is Putative 8-amino-7-oxononanoate synthase (389 aa).

R22 serves as a coordination point for substrate. Position 109-110 (109-110 (GY)) interacts with pyridoxal 5'-phosphate. Position 134 (H134) interacts with substrate. Pyridoxal 5'-phosphate is bound by residues S182, 207–210 (DDAH), and 238–241 (TLSK). N6-(pyridoxal phosphate)lysine is present on K241. T350 lines the substrate pocket.

It belongs to the class-II pyridoxal-phosphate-dependent aminotransferase family. BioF subfamily. As to quaternary structure, homodimer. The cofactor is pyridoxal 5'-phosphate.

The catalysed reaction is 6-carboxyhexanoyl-[ACP] + L-alanine + H(+) = (8S)-8-amino-7-oxononanoate + holo-[ACP] + CO2. The protein operates within cofactor biosynthesis; biotin biosynthesis. Catalyzes the decarboxylative condensation of pimeloyl-[acyl-carrier protein] and L-alanine to produce 8-amino-7-oxononanoate (AON), [acyl-carrier protein], and carbon dioxide. This is Putative 8-amino-7-oxononanoate synthase (bioF) from Parvibaculum lavamentivorans (strain DS-1 / DSM 13023 / NCIMB 13966).